The chain runs to 493 residues: Arginine decarboxylase (493 aa).

At lysine 229 the chain carries N6-(pyridoxal phosphate)lysine.

Belongs to the Orn/Lys/Arg decarboxylase class-I family. It depends on pyridoxal 5'-phosphate as a cofactor.

It is found in the cytoplasm. It carries out the reaction L-arginine + H(+) = agmatine + CO2. It functions in the pathway amine and polyamine biosynthesis; agmatine biosynthesis; agmatine from L-arginine: step 1/1. Its function is as follows. Catalyzes the formation of agmatine from arginine. In Bacillus anthracis, this protein is Arginine decarboxylase (speA).